Here is a 216-residue protein sequence, read N- to C-terminus: Fibroblast growth factor 19 (216 aa).

Positions 1 to 24 are cleaved as a signal peptide; that stretch reads MRSGCVVVHVWILAGLWLAVAGRP. Disulfide bonds link Cys-58/Cys-70 and Cys-102/Cys-120.

Belongs to the heparin-binding growth factors family. In terms of assembly, interacts with FGFR1, FGFR2, FGFR3 and FGFR4. Affinity between fibroblast growth factors (FGFs) and their receptors is increased by KL, KLB and heparan sulfate glycosaminoglycans that function as coreceptors. Interacts with KL; this interaction is direct. Interacts with KLB; this interaction is direct. Interacts with FGFR4 in the presence of heparin, KL or KLB. Interacts with MALRD1. Expressed in fetal brain, cartilage, retina, and adult gall bladder.

The protein resides in the secreted. Functionally, involved in the suppression of bile acid biosynthesis through down-regulation of CYP7A1 expression, following positive regulation of the JNK and ERK1/2 cascades. Stimulates glucose uptake in adipocytes. Activity requires the presence of KLB and FGFR4. The protein is Fibroblast growth factor 19 (FGF19) of Homo sapiens (Human).